Here is a 160-residue protein sequence, read N- to C-terminus: MRCPFCGAEDTSVVDSRVSEEGSRIRRRRQCTACGKRFTTYETVEVRFPQIIKQGGNRVEFNREKLYTSFARALHKRPVPVGQVDAAIERILQKLLGGGAQEISSRTIGEWVMQELYKLDKVAYIRFASVYRSFEDVGDFQEVIREVQASPSSLDDEPPG.

The segment at 3-34 is a zinc-finger region; the sequence is CPFCGAEDTSVVDSRVSEEGSRIRRRRQCTAC. An ATP-cone domain is found at 49–139; it reads PQIIKQGGNR…VYRSFEDVGD (91 aa).

It belongs to the NrdR family. It depends on Zn(2+) as a cofactor.

In terms of biological role, negatively regulates transcription of bacterial ribonucleotide reductase nrd genes and operons by binding to NrdR-boxes. This chain is Transcriptional repressor NrdR, found in Nitrosomonas eutropha (strain DSM 101675 / C91 / Nm57).